Here is a 485-residue protein sequence, read N- to C-terminus: Glutamyl-tRNA(Gln) amidotransferase subunit A (485 aa).

Residues Lys74 and Ser149 each act as charge relay system in the active site. The active-site Acyl-ester intermediate is Ser173.

It belongs to the amidase family. GatA subfamily. In terms of assembly, heterotrimer of A, B and C subunits.

The catalysed reaction is L-glutamyl-tRNA(Gln) + L-glutamine + ATP + H2O = L-glutaminyl-tRNA(Gln) + L-glutamate + ADP + phosphate + H(+). Its function is as follows. Allows the formation of correctly charged Gln-tRNA(Gln) through the transamidation of misacylated Glu-tRNA(Gln) in organisms which lack glutaminyl-tRNA synthetase. The reaction takes place in the presence of glutamine and ATP through an activated gamma-phospho-Glu-tRNA(Gln). In Janthinobacterium sp. (strain Marseille) (Minibacterium massiliensis), this protein is Glutamyl-tRNA(Gln) amidotransferase subunit A.